Reading from the N-terminus, the 568-residue chain is 2-succinyl-5-enolpyruvyl-6-hydroxy-3-cyclohexene-1-carboxylate synthase (568 aa).

It belongs to the TPP enzyme family. MenD subfamily. Homodimer. It depends on Mg(2+) as a cofactor. Mn(2+) is required as a cofactor. Requires thiamine diphosphate as cofactor.

It carries out the reaction isochorismate + 2-oxoglutarate + H(+) = 5-enolpyruvoyl-6-hydroxy-2-succinyl-cyclohex-3-ene-1-carboxylate + CO2. It functions in the pathway quinol/quinone metabolism; 1,4-dihydroxy-2-naphthoate biosynthesis; 1,4-dihydroxy-2-naphthoate from chorismate: step 2/7. It participates in quinol/quinone metabolism; menaquinone biosynthesis. Catalyzes the thiamine diphosphate-dependent decarboxylation of 2-oxoglutarate and the subsequent addition of the resulting succinic semialdehyde-thiamine pyrophosphate anion to isochorismate to yield 2-succinyl-5-enolpyruvyl-6-hydroxy-3-cyclohexene-1-carboxylate (SEPHCHC). The polypeptide is 2-succinyl-5-enolpyruvyl-6-hydroxy-3-cyclohexene-1-carboxylate synthase (Haemophilus influenzae (strain PittEE)).